The sequence spans 348 residues: Protein RecA (348 aa).

64 to 71 (GPESSGKT) serves as a coordination point for ATP.

Belongs to the RecA family.

The protein resides in the cytoplasm. Can catalyze the hydrolysis of ATP in the presence of single-stranded DNA, the ATP-dependent uptake of single-stranded DNA by duplex DNA, and the ATP-dependent hybridization of homologous single-stranded DNAs. It interacts with LexA causing its activation and leading to its autocatalytic cleavage. The chain is Protein RecA from Blastochloris viridis (Rhodopseudomonas viridis).